The following is a 449-amino-acid chain: Phosphoglucosamine mutase (449 aa).

S104 (phosphoserine intermediate) is an active-site residue. 4 residues coordinate Mg(2+): S104, D243, D245, and D247. A Phosphoserine modification is found at S104.

Belongs to the phosphohexose mutase family. Mg(2+) serves as cofactor. In terms of processing, activated by phosphorylation.

It catalyses the reaction alpha-D-glucosamine 1-phosphate = D-glucosamine 6-phosphate. Its function is as follows. Catalyzes the conversion of glucosamine-6-phosphate to glucosamine-1-phosphate. The sequence is that of Phosphoglucosamine mutase from Xanthomonas euvesicatoria pv. vesicatoria (strain 85-10) (Xanthomonas campestris pv. vesicatoria).